The primary structure comprises 372 residues: Queuine tRNA-ribosyltransferase (372 aa).

Catalysis depends on aspartate 89, which acts as the Proton acceptor. Residues 89 to 93 (DSGGF), aspartate 161, and glycine 232 each bind substrate. The interval 262–268 (GIGDLPS) is RNA binding. Residue aspartate 281 is the Nucleophile of the active site. The tract at residues 286–290 (TKAAR) is RNA binding; important for wobble base 34 recognition. The Zn(2+) site is built by cysteine 319, cysteine 321, cysteine 324, and histidine 351.

This sequence belongs to the queuine tRNA-ribosyltransferase family. In terms of assembly, homodimer. Within each dimer, one monomer is responsible for RNA recognition and catalysis, while the other monomer binds to the replacement base PreQ1. The cofactor is Zn(2+).

It carries out the reaction 7-aminomethyl-7-carbaguanine + guanosine(34) in tRNA = 7-aminomethyl-7-carbaguanosine(34) in tRNA + guanine. The protein operates within tRNA modification; tRNA-queuosine biosynthesis. Functionally, catalyzes the base-exchange of a guanine (G) residue with the queuine precursor 7-aminomethyl-7-deazaguanine (PreQ1) at position 34 (anticodon wobble position) in tRNAs with GU(N) anticodons (tRNA-Asp, -Asn, -His and -Tyr). Catalysis occurs through a double-displacement mechanism. The nucleophile active site attacks the C1' of nucleotide 34 to detach the guanine base from the RNA, forming a covalent enzyme-RNA intermediate. The proton acceptor active site deprotonates the incoming PreQ1, allowing a nucleophilic attack on the C1' of the ribose to form the product. After dissociation, two additional enzymatic reactions on the tRNA convert PreQ1 to queuine (Q), resulting in the hypermodified nucleoside queuosine (7-(((4,5-cis-dihydroxy-2-cyclopenten-1-yl)amino)methyl)-7-deazaguanosine). The polypeptide is Queuine tRNA-ribosyltransferase (Chlamydia caviae (strain ATCC VR-813 / DSM 19441 / 03DC25 / GPIC) (Chlamydophila caviae)).